A 183-amino-acid polypeptide reads, in one-letter code: Putative 3-methyladenine DNA glycosylase (183 aa).

The protein belongs to the DNA glycosylase MPG family.

In Rickettsia rickettsii (strain Iowa), this protein is Putative 3-methyladenine DNA glycosylase.